The sequence spans 167 residues: Thioredoxin M-type, chloroplastic (167 aa).

The transit peptide at 1-53 (MAMETCFRAWALHAPAGSKDRLLVGNLVLPSKRALAPLSVGRVATRRPRHVCQ) directs the protein to the chloroplast. A Thioredoxin domain is found at 54–165 (SKNAVDEVVV…LTTLIDKYIG (112 aa)). C89 and C92 are oxidised to a cystine.

It belongs to the thioredoxin family. Plant M-type subfamily. Forms a complex with heterodimeric ferredoxin-thioredoxin reductase (FTR) and ferredoxin.

It is found in the plastid. Its subcellular location is the chloroplast. In terms of biological role, participates in various redox reactions through the reversible oxidation of the active center dithiol to a disulfide. The M form is known to activate NADP-malate dehydrogenase. The chain is Thioredoxin M-type, chloroplastic (TRM1) from Zea mays (Maize).